Reading from the N-terminus, the 516-residue chain is Cytochrome P450 1A2 (516 aa).

Ser69 is a glycosylation site (O-linked (GlcNAc) serine). Phe226 serves as a coordination point for substrate. A heme-binding site is contributed by Cys458.

Belongs to the cytochrome P450 family. Interacts with PGRMC1; the interaction requires PGRMC1 homodimerization. Heme is required as a cofactor.

Its subcellular location is the endoplasmic reticulum membrane. The protein resides in the microsome membrane. It carries out the reaction an organic molecule + reduced [NADPH--hemoprotein reductase] + O2 = an alcohol + oxidized [NADPH--hemoprotein reductase] + H2O + H(+). It catalyses the reaction 17beta-estradiol + reduced [NADPH--hemoprotein reductase] + O2 = 2-hydroxy-17beta-estradiol + oxidized [NADPH--hemoprotein reductase] + H2O + H(+). The catalysed reaction is 17beta-estradiol + reduced [NADPH--hemoprotein reductase] + O2 = 4-hydroxy-17beta-estradiol + oxidized [NADPH--hemoprotein reductase] + H2O + H(+). The enzyme catalyses estrone + reduced [NADPH--hemoprotein reductase] + O2 = 2-hydroxyestrone + oxidized [NADPH--hemoprotein reductase] + H2O + H(+). It carries out the reaction estrone + reduced [NADPH--hemoprotein reductase] + O2 = 4-hydroxyestrone + oxidized [NADPH--hemoprotein reductase] + H2O + H(+). It catalyses the reaction cholesterol + reduced [NADPH--hemoprotein reductase] + O2 = 25-hydroxycholesterol + oxidized [NADPH--hemoprotein reductase] + H2O + H(+). The catalysed reaction is all-trans-retinol + reduced [NADPH--hemoprotein reductase] + O2 = all-trans-retinal + oxidized [NADPH--hemoprotein reductase] + 2 H2O + H(+). The enzyme catalyses all-trans-retinal + reduced [NADPH--hemoprotein reductase] + O2 = all-trans-retinoate + oxidized [NADPH--hemoprotein reductase] + H2O + 2 H(+). It carries out the reaction (5Z,8Z,11Z,14Z)-eicosatetraenoate + reduced [NADPH--hemoprotein reductase] + O2 = (14R,15S)-epoxy-(5Z,8Z,11Z)-eicosatrienoate + oxidized [NADPH--hemoprotein reductase] + H2O + H(+). It catalyses the reaction (5Z,8Z,11Z,14Z)-eicosatetraenoate + reduced [NADPH--hemoprotein reductase] + O2 = (14S,15R)-epoxy-(5Z,8Z,11Z)-eicosatrienoate + oxidized [NADPH--hemoprotein reductase] + H2O + H(+). The catalysed reaction is (5Z,8Z,11Z,14Z,17Z)-eicosapentaenoate + reduced [NADPH--hemoprotein reductase] + O2 = (17R,18S)-epoxy-(5Z,8Z,11Z,14Z)-eicosatetraenoate + oxidized [NADPH--hemoprotein reductase] + H2O + H(+). The enzyme catalyses (4Z,7Z,10Z,13Z,16Z,19Z)-docosahexaenoate + reduced [NADPH--hemoprotein reductase] + O2 = (19R,20S)-epoxy-(4Z,7Z,10Z,13Z,16Z)-docosapentaenoate + oxidized [NADPH--hemoprotein reductase] + H2O + H(+). It carries out the reaction (5S)-hydroperoxy-(6E,8Z,11Z,14Z)-eicosatetraenoate = 5-oxo-(6E,8Z,11Z,14Z)-eicosatetraenoate + H2O. It catalyses the reaction (12S)-hydroperoxy-(5Z,8Z,10E,14Z)-eicosatetraenoate = 12-oxo-(5Z,8Z,10E,14Z)-eicosatetraenoate + H2O. The catalysed reaction is (15S)-hydroperoxy-(5Z,8Z,11Z,13E)-eicosatetraenoate = 15-oxo-(5Z,8Z,11Z,13E)-eicosatetraenoate + H2O. The enzyme catalyses (13S)-hydroperoxy-(9Z,11E)-octadecadienoate = 13-oxo-(9Z,11E)-octadecadienoate + H2O. It carries out the reaction (5Z,8Z,11Z,14Z)-eicosatetraenoate + reduced [NADPH--hemoprotein reductase] + O2 = 13-hydroxy-(5Z,8Z,11Z,14Z)-eicosatetraenoate + oxidized [NADPH--hemoprotein reductase] + H2O + H(+). It catalyses the reaction (5Z,8Z,11Z,14Z)-eicosatetraenoate + reduced [NADPH--hemoprotein reductase] + O2 = 19-hydroxy-(5Z,8Z,11Z,14Z)-eicosatetraenoate + oxidized [NADPH--hemoprotein reductase] + H2O + H(+). The catalysed reaction is (9Z,12Z)-octadecadienoate + reduced [NADPH--hemoprotein reductase] + O2 = 11-hydroxy-(9Z,12Z)-octadecadienoate + oxidized [NADPH--hemoprotein reductase] + H2O + H(+). It functions in the pathway cofactor metabolism; retinol metabolism. The protein operates within steroid metabolism; cholesterol metabolism. It participates in lipid metabolism; arachidonate metabolism. A cytochrome P450 monooxygenase involved in the metabolism of various endogenous substrates, including fatty acids, steroid hormones and vitamins. Mechanistically, uses molecular oxygen inserting one oxygen atom into a substrate, and reducing the second into a water molecule, with two electrons provided by NADPH via cytochrome P450 reductase (NADPH--hemoprotein reductase). Catalyzes the hydroxylation of carbon-hydrogen bonds. Exhibits high catalytic activity for the formation of hydroxyestrogens from estrone (E1) and 17beta-estradiol (E2), namely 2-hydroxy E1 and E2. Metabolizes cholesterol toward 25-hydroxycholesterol, a physiological regulator of cellular cholesterol homeostasis. May act as a major enzyme for all-trans retinoic acid biosynthesis in the liver. Catalyzes two successive oxidative transformation of all-trans retinol to all-trans retinal and then to the active form all-trans retinoic acid. Primarily catalyzes stereoselective epoxidation of the last double bond of polyunsaturated fatty acids (PUFA), displaying a strong preference for the (R,S) stereoisomer. Catalyzes bisallylic hydroxylation and omega-1 hydroxylation of PUFA. May also participate in eicosanoids metabolism by converting hydroperoxide species into oxo metabolites (lipoxygenase-like reaction, NADPH-independent). Plays a role in the oxidative metabolism of xenobiotics. Catalyzes the N-hydroxylation of heterocyclic amines and the O-deethylation of phenacetin. Metabolizes caffeine via N3-demethylation. This is Cytochrome P450 1A2 (CYP1A2) from Macaca fuscata fuscata (Japanese macaque).